We begin with the raw amino-acid sequence, 497 residues long: Guanosine-5'-triphosphate,3'-diphosphate pyrophosphatase (497 aa).

This sequence belongs to the GppA/Ppx family. GppA subfamily.

It carries out the reaction guanosine 3'-diphosphate 5'-triphosphate + H2O = guanosine 3',5'-bis(diphosphate) + phosphate + H(+). It participates in purine metabolism; ppGpp biosynthesis; ppGpp from GTP: step 2/2. Catalyzes the conversion of pppGpp to ppGpp. Guanosine pentaphosphate (pppGpp) is a cytoplasmic signaling molecule which together with ppGpp controls the 'stringent response', an adaptive process that allows bacteria to respond to amino acid starvation, resulting in the coordinated regulation of numerous cellular activities. This Vibrio atlanticus (strain LGP32) (Vibrio splendidus (strain Mel32)) protein is Guanosine-5'-triphosphate,3'-diphosphate pyrophosphatase.